The primary structure comprises 179 residues: Chymotrypsin inhibitor ECI (179 aa).

The residue at position 1 (Q1) is a Pyrrolidone carboxylic acid. Intrachain disulfides connect C40/C84 and C134/C143.

The protein belongs to the protease inhibitor I3 (leguminous Kunitz-type inhibitor) family.

In terms of biological role, inhibition of chymotrypsin. In Erythrina variegata (Indian coral tree), this protein is Chymotrypsin inhibitor ECI.